Reading from the N-terminus, the 20-residue chain is 21 kDa cold shock-induced protein (20 aa).

Over residues 1–12 (TDSIKETIKETV) the composition is skewed to basic and acidic residues. Residues 1–20 (TDSIKETIKETVNHQAEWPY) are disordered.

This Streptococcus thermophilus protein is 21 kDa cold shock-induced protein.